Consider the following 2163-residue polypeptide: Myosin-VIIa (2163 aa).

One can recognise a Myosin motor domain in the interval 58–728 (QGVEDMISLG…HDLFLEQERD (671 aa)). 151-158 (GESGAGKT) provides a ligand contact to ATP. 2 actin-binding regions span residues 607–629 (LDSL…KPNE) and 707–721 (QLGH…AHDL). IQ domains follow at residues 731–753 (LTRK…RFLR), 754–783 (MRQA…GYMR), 800–822 (LRGH…EYGL), and 823–852 (KMWA…EYRR). Positions 886–914 (RLNEIERKEIEQELEERRRVEVKKNIIND) form a coiled coil. Positions 937–958 (PDSSSEAPTPHGGRETSVFNDL) are disordered. Positions 1003-1239 (YSRKPLKHPL…PSWLELQATK (237 aa)) constitute a MyTH4 1 domain. Positions 1244 to 1554 (IMLPITFMDG…YFLEGLKKRS (311 aa)) constitute an FERM 1 domain. In terms of domain architecture, SH3 spans 1552–1621 (KRSKFVIALQ…PAEIVYVLPS (70 aa)). The MyTH4 2 domain maps to 1697–1845 (YSREPLKQPL…PHQVEVEAIQ (149 aa)). One can recognise an FERM 2 domain in the interval 1851–2154 (IFHKVYFPDD…SYISLMLTNM (304 aa)).

This sequence belongs to the TRAFAC class myosin-kinesin ATPase superfamily. Myosin family. Homodimerizes in a two headed molecule through the formation of a coiled-coil rod.

The protein localises to the cytoplasm. Its function is as follows. Myosins are actin-based motor molecules with ATPase activity. Unconventional myosins serve in intracellular movements: can function in cells as a single-molecule cargo transporter. A very slow and high-duty-ratio motor, may be suitable for tension maintenance of actin filaments. Their highly divergent tails are presumed to bind to membranous compartments, which would be moved relative to actin filaments. Plays a key role in the formation of cellular projections and other actin-based functions required for embryonic and larval viability. Necessary for auditory transduction: plays a role in Johnston organ (JO) organization by functioning in scolopidial apical attachment and therefore to acoustic stimulus propagation from the antenna a2/a3 joint to transducing elements. The polypeptide is Myosin-VIIa (Aedes aegypti (Yellowfever mosquito)).